The primary structure comprises 276 residues: Lipoyl synthase (276 aa).

Residues Cys-27, Cys-32, Cys-38, Cys-53, Cys-57, Cys-60, and Ser-266 each contribute to the [4Fe-4S] cluster site. A Radical SAM core domain is found at 39–255 (FGNKTATFMI…EEIGYEMGFK (217 aa)).

The protein belongs to the radical SAM superfamily. Lipoyl synthase family. The cofactor is [4Fe-4S] cluster.

The protein resides in the cytoplasm. It catalyses the reaction [[Fe-S] cluster scaffold protein carrying a second [4Fe-4S](2+) cluster] + N(6)-octanoyl-L-lysyl-[protein] + 2 oxidized [2Fe-2S]-[ferredoxin] + 2 S-adenosyl-L-methionine + 4 H(+) = [[Fe-S] cluster scaffold protein] + N(6)-[(R)-dihydrolipoyl]-L-lysyl-[protein] + 4 Fe(3+) + 2 hydrogen sulfide + 2 5'-deoxyadenosine + 2 L-methionine + 2 reduced [2Fe-2S]-[ferredoxin]. The protein operates within protein modification; protein lipoylation via endogenous pathway; protein N(6)-(lipoyl)lysine from octanoyl-[acyl-carrier-protein]: step 2/2. Functionally, catalyzes the radical-mediated insertion of two sulfur atoms into the C-6 and C-8 positions of the octanoyl moiety bound to the lipoyl domains of lipoate-dependent enzymes, thereby converting the octanoylated domains into lipoylated derivatives. This is Lipoyl synthase from Aquifex aeolicus (strain VF5).